Here is a 237-residue protein sequence, read N- to C-terminus: Ribonuclease PH (237 aa).

Residues arginine 86 and 124–126 (GTR) contribute to the phosphate site.

It belongs to the RNase PH family. As to quaternary structure, homohexameric ring arranged as a trimer of dimers.

It catalyses the reaction tRNA(n+1) + phosphate = tRNA(n) + a ribonucleoside 5'-diphosphate. Phosphorolytic 3'-5' exoribonuclease that plays an important role in tRNA 3'-end maturation. Removes nucleotide residues following the 3'-CCA terminus of tRNAs; can also add nucleotides to the ends of RNA molecules by using nucleoside diphosphates as substrates, but this may not be physiologically important. Probably plays a role in initiation of 16S rRNA degradation (leading to ribosome degradation) during starvation. This Shewanella pealeana (strain ATCC 700345 / ANG-SQ1) protein is Ribonuclease PH.